Consider the following 199-residue polypeptide: UPF0462 protein C4orf33 (199 aa).

Belongs to the UPF0462 family.

This is UPF0462 protein C4orf33 (C4orf33) from Homo sapiens (Human).